We begin with the raw amino-acid sequence, 335 residues long: 5-dehydro-2-deoxygluconokinase (335 aa).

It belongs to the carbohydrate kinase PfkB family.

It carries out the reaction 5-dehydro-2-deoxy-D-gluconate + ATP = 6-phospho-5-dehydro-2-deoxy-D-gluconate + ADP + H(+). It participates in polyol metabolism; myo-inositol degradation into acetyl-CoA; acetyl-CoA from myo-inositol: step 5/7. Its function is as follows. Catalyzes the phosphorylation of 5-dehydro-2-deoxy-D-gluconate (2-deoxy-5-keto-D-gluconate or DKG) to 6-phospho-5-dehydro-2-deoxy-D-gluconate (DKGP). This chain is 5-dehydro-2-deoxygluconokinase, found in Geobacillus kaustophilus (strain HTA426).